A 711-amino-acid chain; its full sequence is Glycine--tRNA ligase beta subunit (711 aa).

This sequence belongs to the class-II aminoacyl-tRNA synthetase family. In terms of assembly, tetramer of two alpha and two beta subunits.

It is found in the cytoplasm. It carries out the reaction tRNA(Gly) + glycine + ATP = glycyl-tRNA(Gly) + AMP + diphosphate. This chain is Glycine--tRNA ligase beta subunit, found in Polaromonas naphthalenivorans (strain CJ2).